The sequence spans 226 residues: CRISPR-associated protein Cas5 (226 aa).

This sequence belongs to the CRISPR-associated protein Cas5 family. Subtype I-A/Apern subfamily. In terms of assembly, can form a Cascade complex with Csa5, Cas7, Cas3, Cas3' and Cas8a2.

CRISPR (clustered regularly interspaced short palindromic repeat) is an adaptive immune system that provides protection against mobile genetic elements (viruses, transposable elements and conjugative plasmids). CRISPR clusters contain spacers, sequences complementary to antecedent mobile elements, and target invading nucleic acids. CRISPR clusters are transcribed and processed into CRISPR RNA (crRNA). In Thermoproteus tenax (strain ATCC 35583 / DSM 2078 / JCM 9277 / NBRC 100435 / Kra 1), this protein is CRISPR-associated protein Cas5 (cas5a).